Consider the following 397-residue polypeptide: Homoserine O-acetyltransferase (397 aa).

The AB hydrolase-1 domain maps to 58–368 (NAVLVLHALT…EAKWGHDAFL (311 aa)). Serine 164 acts as the Nucleophile in catalysis. Arginine 233 is a substrate binding site. Residues aspartate 331 and histidine 364 contribute to the active site. Residue aspartate 365 participates in substrate binding.

The protein belongs to the AB hydrolase superfamily. MetX family. As to quaternary structure, homodimer.

It localises to the cytoplasm. The catalysed reaction is L-homoserine + acetyl-CoA = O-acetyl-L-homoserine + CoA. Its pathway is amino-acid biosynthesis; L-methionine biosynthesis via de novo pathway; O-acetyl-L-homoserine from L-homoserine: step 1/1. In terms of biological role, transfers an acetyl group from acetyl-CoA to L-homoserine, forming acetyl-L-homoserine. In Solidesulfovibrio magneticus (strain ATCC 700980 / DSM 13731 / RS-1) (Desulfovibrio magneticus), this protein is Homoserine O-acetyltransferase.